Here is a 501-residue protein sequence, read N- to C-terminus: Lysine--tRNA ligase (501 aa).

2 residues coordinate Mg(2+): glutamate 406 and glutamate 413.

Belongs to the class-II aminoacyl-tRNA synthetase family. In terms of assembly, homodimer. Mg(2+) is required as a cofactor.

It localises to the cytoplasm. It catalyses the reaction tRNA(Lys) + L-lysine + ATP = L-lysyl-tRNA(Lys) + AMP + diphosphate. In Halalkalibacterium halodurans (strain ATCC BAA-125 / DSM 18197 / FERM 7344 / JCM 9153 / C-125) (Bacillus halodurans), this protein is Lysine--tRNA ligase (lysS).